The chain runs to 595 residues: APOBEC1 complementation factor (595 aa).

RRM domains follow at residues 56–134, 136–218, and 231–303; these read CEIF…ASVD, CRLF…WAEP, and KILY…LAKP. The interval 360 to 409 is required for nuclear localization; it reads HFPATKGHLSNRALIRTPSVREIYMNVPVGAAGVRGLGGRGYLAYTGLGR.

As to quaternary structure, part of the apolipoprotein B mRNA editing complex with APOBEC1. Interacts with TNPO2; TNPO2 may be responsible for transport of A1CF into the nucleus. Interacts with SYNCRIP. Interacts with CELF2/CUGBP2. Interacts with RBM47. As to expression, expressed primarily in liver, small intestine and kidney.

The protein resides in the nucleus. The protein localises to the endoplasmic reticulum. It is found in the cytoplasm. Its function is as follows. Essential component of the apolipoprotein B mRNA editing enzyme complex which is responsible for the postranscriptional editing of a CAA codon for Gln to a UAA codon for stop in APOB mRNA. Binds to APOB mRNA and is probably responsible for docking the catalytic subunit, APOBEC1, to the mRNA to allow it to deaminate its target cytosine. The complex also seems to protect the edited APOB mRNA from nonsense-mediated decay. This chain is APOBEC1 complementation factor (A1cf), found in Mus musculus (Mouse).